We begin with the raw amino-acid sequence, 839 residues long: uncharacterized protein (839 aa).

Disordered regions lie at residues 504-611, 627-646, and 682-839; these read TVSP…NVVN, KNNN…DNHC, and NHNY…SLGS. The span at 509 to 611 shows a compositional bias: low complexity; it reads GNNNVTGDVD…EGSNNCNVVN (103 aa). Residues 636-646 show a composition bias toward basic and acidic residues; that stretch reads NEYKNSNDNHC. 2 stretches are compositionally biased toward low complexity: residues 689–704 and 713–753; these read NGNN…NNNN and QQQP…NNNK. Residues 726–764 adopt a coiled-coil conformation; the sequence is QQSQQQPQLQQKKQQIQEEQQNLNNNNKSIEDDEEAFNS. The span at 765–776 shows a compositional bias: basic and acidic residues; that stretch reads DDEHDHEDDSIR. The segment covering 809–823 has biased composition (acidic residues); sequence EDNDDDSDISDSDSD.

This is an uncharacterized protein from Dictyostelium discoideum (Social amoeba).